Reading from the N-terminus, the 4239-residue chain is Tenellin synthetase (4239 aa).

Residues 15-454 enclose the Ketosynthase family 3 (KS3) domain; that stretch reads SEPIAIIGSA…GTNAHAIIER (440 aa). Residues C189, H326, and H374 each act as for beta-ketoacyl synthase activity in the active site. Residues 589–923 form a malonyl-CoA:ACP transacylase (MAT) domain region; it reads VFTGQGAQWP…ANDAVAFSTA (335 aa). Residues 993 to 1135 are N-terminal hotdog fold; the sequence is HELLGRRTPD…GRIAVQLGAK (143 aa). The interval 993 to 1310 is dehydratase (DH) domain; it reads HELLGRRTPD…GFEVRAVGEP (318 aa). The region spanning 993–1313 is the PKS/mFAS DH domain; the sequence is HELLGRRTPD…VRAVGEPDAS (321 aa). H1025 serves as the catalytic Proton acceptor; for dehydratase activity. The interval 1158-1313 is C-terminal hotdog fold; that stretch reads LQQLDCEKLY…VRAVGEPDAS (156 aa). D1217 serves as the catalytic Proton donor; for dehydratase activity. The interval 1459–1652 is methyltransferase (MT) domain; the sequence is RLYTEDKGMH…FSGVDHIVHD (194 aa). Residues 2209–2382 form a ketoreductase (KR) domain region; the sequence is TYLMVGAAGG…AASIIHVGHV (174 aa). A Carrier 1 domain is found at 2502–2582; that stretch reads EAAVAALKGF…QLSALAAKLA (81 aa). S2542 carries the post-translational modification O-(pantetheine 4'-phosphoryl)serine. Disordered regions lie at residues 2587-2629 and 2642-2712; these read KKRA…EIAQ and LEAS…FFTQ. Composition is skewed to polar residues over residues 2648 to 2662 and 2670 to 2681; these read GGSS…SSVS and ESTLQSSDNNGE. Residues 2682–2698 are compositionally biased toward low complexity; it reads STPSKSSNCNSDSGSDN. Positions 2723 to 3169 are condensation (C) domain; the sequence is REAPMSPAQS…SAQSVGDCVV (447 aa). Residues 3203 to 3614 are adenylation (A) (KR) domain; the sequence is CQQHSTKSAI…DGTLLCFGRI (412 aa). Residues 3728-3752 are disordered; that stretch reads EAAAATSPSNNNINNNTPSGGGGEK. A compositionally biased stretch (low complexity) spans 3729–3745; that stretch reads AAAATSPSNNNINNNTP. The Carrier 2 domain maps to 3751-3835; sequence EKMTVRQGEL…GMARCVAEQR (85 aa). Position 3795 is an O-(pantetheine 4'-phosphoryl)serine (S3795). The interval 3862–3892 is disordered; it reads EKLQHSSASSSSSSSSSSSAGSSSTQRPRKT. Over residues 3867 to 3885 the composition is skewed to low complexity; it reads SSASSSSSSSSSSSAGSSS. Positions 3899 to 4145 are reductase (RED) domain; the sequence is LTGATGFLGG…LDFGQVDKVV (247 aa).

In the C-terminal section; belongs to the NRP synthetase family.

Its pathway is secondary metabolite biosynthesis. Hybrid PKS-NRPS synthetase; part of the gene cluster that mediates the biosynthesis of tenellin-type 2-pyridones, iron-chelating compounds involved in iron stress tolerance, competition with the natural competitor fungus Metarhizium robertsii and insect hosts infection. TenS catalyzes the assembly of the polyketide-amino acid backbone. Because tenS lacks a designated enoylreductase (ER) domain, the required activity is provided the enoyl reductase tenC. Upon formation of the polyketide backbone on the thiotemplate, the triketide is transferred to the NRPS module and linked to tyrosine to produce the pyrrolidine-2-dione intermediates, including pretellinin A, 11-hydropretellenin A, 12-hydropretellenin A, 13-hydropretellenin A, 14-hydropretellenin A, 12-oxopretellenin A and prototellinin D. The pathway begins with the assembly of the polyketide-amino acid backbone by the hybrid PKS-NRPS tenS with the help of the enoyl reductase tenC. These enzymes catalyze the synthesis of the pyrrolidine-2-dione intermediates pretellinin A, 11-hydropretellenin A, 12-hydropretellenin A, 13-hydropretellenin A, 14-hydropretellenin A, 12-oxopretellenin A and prototellinin D. The cytochrome P450 monooxygenase tenA then catalyzes an oxidative ring expansion of pretenellin A and 14-hydropretellenin A to form the 2-pyridone core, leading to pretenellin B and pyridovericin, respectively. The cytochrome P450 monooxygenase tenB is then required for the selective N-hydroxylation of the 2-pyridone nitrogen of yield tellinin and 15-hydroxytellenin (15-HT), respectively. The UDP-glucosyltransferase GT1 and the methyltransferase MT1, located outside the tenS gene cluster, contribute to the stepwise glycosylation and methylation of 15-HT to obtain the glycoside pyridovericin-N-O-(4-O-methyl-beta-D-glucopyranoside) (PMGP). Additional related compounds such as 1-O-methyl-15-HT, (8Z)-1-O-methyl-15-HT, and O-methyltenellin A are also produced but the enzymes involved in their biosynthesis have still to be determined. This chain is Tenellin synthetase, found in Beauveria bassiana (White muscardine disease fungus).